Here is a 727-residue protein sequence, read N- to C-terminus: Engulfment and cell motility protein 1 (727 aa).

Tyrosine 18 carries the phosphotyrosine; by HCK modification. N6-acetyllysine occurs at positions 100 and 105. Tyrosine 216 is subject to Phosphotyrosine; by HCK. One can recognise an ELMO domain in the interval 319–492 (AQRDIIFELR…VVKEQVMRAL (174 aa)). Serine 344 bears the Phosphoserine mark. 2 positions are modified to phosphotyrosine; by HCK: tyrosine 395 and tyrosine 511. Residues 555–676 (RLVEGTCFRK…DGLNALLGKD (122 aa)) enclose the PH domain. Positions 707 to 714 (PDAPPPIP) match the SH3-binding motif. Phosphotyrosine; by HCK is present on tyrosine 720.

In terms of assembly, interacts with ADGRB1. Interacts directly with the SH3-domain of DOCK1 via its SH3-binding site. Part of a complex with DOCK1 and RAC1. Part of a complex with DOCK1 and CRK isoform CRK-II. Interacts with PLEKHG6. Interacts with HCK (via SH3 domain). Interacts with ADGRB3. Interacts with DOCK5. In terms of processing, phosphorylated by HCK. As to expression, widely expressed, with a higher expression in the spleen and placenta.

The protein resides in the cytoplasm. Its subcellular location is the cell membrane. Functionally, involved in cytoskeletal rearrangements required for phagocytosis of apoptotic cells and cell motility. Acts in association with DOCK1 and CRK. Was initially proposed to be required in complex with DOCK1 to activate Rac Rho small GTPases. May enhance the guanine nucleotide exchange factor (GEF) activity of DOCK1. The sequence is that of Engulfment and cell motility protein 1 (ELMO1) from Homo sapiens (Human).